A 381-amino-acid chain; its full sequence is Opsin Rh2 (381 aa).

Residues 1–56 (MERSLLPEPPLAMALLGPRFEAQTGGNRSVLDNVLPDMAPLVNPYWSRFAPMDPTM) lie on the Extracellular side of the membrane. Asn-27 carries N-linked (GlcNAc...) asparagine glycosylation. Residues 57 to 81 (SKILGLFTLVILIISCCGNGVVVYI) form a helical membrane-spanning segment. At 82 to 93 (FGGTKSLRTPAN) the chain is on the cytoplasmic side. A helical membrane pass occupies residues 94-119 (LLVLNLAFSDFCMMASQSPVMIINFY). The Extracellular segment spans residues 120 to 133 (YETWVLGPLWCDIY). An intrachain disulfide couples Cys-130 to Cys-207. The helical transmembrane segment at 134–153 (AACGSLFGCVSIWSMCMIAF) threads the bilayer. Over 154–172 (DRYNVIVKGINGTPMTIKT) the chain is Cytoplasmic. A helical membrane pass occupies residues 173 to 196 (SIMKIAFIWMMAVFWTIMPLIGWS). The Extracellular portion of the chain corresponds to 197–220 (SYVPEGNLTACSIDYMTRQWNPRS). Residues 221 to 248 (YLITYSLFVYYTPLFMICYSYWFIIATV) traverse the membrane as a helical segment. Over 249-283 (AAHEKAMRDQAKKMNVKSLRSSEDCDKSAENKLAK) the chain is Cytoplasmic. Residues 284-307 (VALTTISLWFMAWTPYLIICYFGL) traverse the membrane as a helical segment. The Extracellular portion of the chain corresponds to 308–314 (FKIDGLT). A helical membrane pass occupies residues 315–339 (PLTTIWGATFAKTSAVYNPIVYGIS). Lys-326 is modified (N6-(retinylidene)lysine). Residues 340-381 (HPKYRLVLKEKCPMCVCGSTDEPKPDAPPSDTETTSEAESKA) are Cytoplasmic-facing. The tract at residues 358-381 (STDEPKPDAPPSDTETTSEAESKA) is disordered. The segment covering 370–381 (DTETTSEAESKA) has biased composition (polar residues).

It belongs to the G-protein coupled receptor 1 family. Opsin subfamily. In terms of processing, some or all of the Ser/Thr residues present in the C-terminal part may be phosphorylated.

Its subcellular location is the membrane. In terms of biological role, visual pigments are the light-absorbing molecules that mediate vision. They consist of an apoprotein, opsin, covalently linked to cis-retinal. The chain is Opsin Rh2 (Rh2) from Drosophila pseudoobscura pseudoobscura (Fruit fly).